The primary structure comprises 65 residues: uncharacterized protein (65 aa).

Its subcellular location is the plastid. It is found in the chloroplast. This is an uncharacterized protein from Guillardia theta (Cryptophyte).